The following is a 500-amino-acid chain: Probable cytosol aminopeptidase (500 aa).

Residues Lys-264 and Asp-269 each coordinate Mn(2+). Lys-276 is an active-site residue. The Mn(2+) site is built by Asp-287, Asp-346, and Glu-348. The active site involves Arg-350.

The protein belongs to the peptidase M17 family. Requires Mn(2+) as cofactor.

It is found in the cytoplasm. It carries out the reaction Release of an N-terminal amino acid, Xaa-|-Yaa-, in which Xaa is preferably Leu, but may be other amino acids including Pro although not Arg or Lys, and Yaa may be Pro. Amino acid amides and methyl esters are also readily hydrolyzed, but rates on arylamides are exceedingly low.. The catalysed reaction is Release of an N-terminal amino acid, preferentially leucine, but not glutamic or aspartic acids.. Presumably involved in the processing and regular turnover of intracellular proteins. Catalyzes the removal of unsubstituted N-terminal amino acids from various peptides. The polypeptide is Probable cytosol aminopeptidase (Rhodopseudomonas palustris (strain BisB5)).